The chain runs to 500 residues: NF-kappa-B inhibitor epsilon (500 aa).

Residues 1 to 10 show a composition bias toward basic and acidic residues; the sequence is MNQRRSESRP. 3 disordered regions span residues 1-66, 84-215, and 222-241; these read MNQR…PAWA, LSSL…YGSS, and SLLG…LPHV. A phosphoserine mark is found at serine 157, serine 161, and serine 183. The segment covering 161–186 has biased composition (low complexity); that stretch reads SLRSLRSLPESTSAPASGPSDGSPQP. A compositionally biased stretch (basic and acidic residues) spans 196–209; that stretch reads EPQEKEDADGERAD. ANK repeat units follow at residues 258–291, 293–322, 326–355, 369–398, 403–432, and 436–465; these read DGDT…DIQN, LYQT…SRAL, HGDT…EPGR, QGLA…DIDV, SGKT…QVDA, and NGCT…DSLL.

It belongs to the NF-kappa-B inhibitor family. In terms of assembly, interacts with RELA, REL, NFKB1 nuclear factor NF-kappa-B p50 subunit and NFKB2 nuclear factor NF-kappa-B p52 subunit. Interacts with HNRNPA2B1; the interaction may be mediated by the RRM2 domain of HNRNPA2B1, and HNRNPA2B1 may interact simultaneously with FAM76B and either NFKBIA or NFKBIE to form a complex. Post-translationally, serine phosphorylated; followed by proteasome-dependent degradation. Highly expressed in spleen, testis and lung, followed by kidney, pancreas, heart, placenta and brain. Also expressed in granulocytes and macrophages.

It localises to the cytoplasm. Its function is as follows. Sequesters NF-kappa-B transcription factor complexes in the cytoplasm, thereby inhibiting their activity. Sequestered complexes include NFKB1-RELA (p50-p65) and NFKB1-REL (p50-c-Rel) complexes. Limits B-cell activation in response to pathogens, and also plays an important role in B-cell development. This chain is NF-kappa-B inhibitor epsilon (NFKBIE), found in Homo sapiens (Human).